A 201-amino-acid chain; its full sequence is 3-isopropylmalate dehydratase small subunit (201 aa).

This sequence belongs to the LeuD family. LeuD type 1 subfamily. Heterodimer of LeuC and LeuD.

The catalysed reaction is (2R,3S)-3-isopropylmalate = (2S)-2-isopropylmalate. It participates in amino-acid biosynthesis; L-leucine biosynthesis; L-leucine from 3-methyl-2-oxobutanoate: step 2/4. Its function is as follows. Catalyzes the isomerization between 2-isopropylmalate and 3-isopropylmalate, via the formation of 2-isopropylmaleate. In Shewanella sp. (strain MR-7), this protein is 3-isopropylmalate dehydratase small subunit.